Consider the following 84-residue polypeptide: Small ribosomal subunit protein bS16 (84 aa).

This sequence belongs to the bacterial ribosomal protein bS16 family.

The polypeptide is Small ribosomal subunit protein bS16 (Acaryochloris marina (strain MBIC 11017)).